Here is a 600-residue protein sequence, read N- to C-terminus: Dihydroxy-acid dehydratase (600 aa).

Residue Asp82 coordinates Mg(2+). Cys123 contributes to the [2Fe-2S] cluster binding site. Mg(2+)-binding residues include Asp124 and Lys125. Residue Lys125 is modified to N6-carboxylysine. A [2Fe-2S] cluster-binding site is contributed by Cys192. Glu489 is a Mg(2+) binding site. The active-site Proton acceptor is the Ser515.

This sequence belongs to the IlvD/Edd family. As to quaternary structure, homodimer. [2Fe-2S] cluster serves as cofactor. Requires Mg(2+) as cofactor.

The enzyme catalyses (2R)-2,3-dihydroxy-3-methylbutanoate = 3-methyl-2-oxobutanoate + H2O. The catalysed reaction is (2R,3R)-2,3-dihydroxy-3-methylpentanoate = (S)-3-methyl-2-oxopentanoate + H2O. It functions in the pathway amino-acid biosynthesis; L-isoleucine biosynthesis; L-isoleucine from 2-oxobutanoate: step 3/4. It participates in amino-acid biosynthesis; L-valine biosynthesis; L-valine from pyruvate: step 3/4. Functions in the biosynthesis of branched-chain amino acids. Catalyzes the dehydration of (2R,3R)-2,3-dihydroxy-3-methylpentanoate (2,3-dihydroxy-3-methylvalerate) into 2-oxo-3-methylpentanoate (2-oxo-3-methylvalerate) and of (2R)-2,3-dihydroxy-3-methylbutanoate (2,3-dihydroxyisovalerate) into 2-oxo-3-methylbutanoate (2-oxoisovalerate), the penultimate precursor to L-isoleucine and L-valine, respectively. The chain is Dihydroxy-acid dehydratase from Bacteroides fragilis (strain YCH46).